The chain runs to 385 residues: Probable caffeine synthase 3 (385 aa).

S-adenosyl-L-homocysteine-binding residues include Y18, C62, N67, D101, L102, S140, and F141. 3 residues coordinate caffeine: Y158, Q161, and F162. N179 provides a ligand contact to Mg(2+). T238 contacts caffeine. Mg(2+) contacts are provided by D261, F263, and N264. Y369 contacts caffeine.

It belongs to the methyltransferase superfamily. Type-7 methyltransferase family. The cofactor is Mg(2+). As to expression, expressed in roots, stems, young and old leaves.

The protein operates within alkaloid biosynthesis. In terms of biological role, may be involved in the biosynthesis of caffeine. The protein is Probable caffeine synthase 3 of Coffea arabica (Arabian coffee).